Here is a 1656-residue protein sequence, read N- to C-terminus: Probable phospholipid-transporting ATPase DNF3 (1656 aa).

Over 1 to 164 (MGIADGQRRR…PRQLYAQFSK (164 aa)) the chain is Lumenal. Positions 36–74 (ELEDINESKTFSGSDNNDKDDRDETSGNYAAEEDYEMEE) are disordered. The segment covering 51–60 (NNDKDDRDET) has biased composition (basic and acidic residues). The helical transmembrane segment at 165 to 185 (LANTYFFIVAVLQMIPGWSTT) threads the bilayer. Over 186 to 451 (GTYTTIIPLC…RTKAPKLQRK (266 aa)) the chain is Cytoplasmic. Residues 452-472 (INMIIVFMVFVVATISLFSYL) traverse the membrane as a helical segment. Topologically, residues 473 to 495 (GHVLHKKKYIDQNKAWYLFQADA) are lumenal. The helical transmembrane segment at 496-516 (GVAPTIMSFIIMYNTVIPLSL) threads the bilayer. Residues 517-1157 (YVTMEIIKVV…ISKMNAVSQE (641 aa)) are Cytoplasmic-facing. The active-site 4-aspartylphosphate intermediate is the aspartate 566. Positions 566, 567, and 568 each coordinate ATP. Aspartate 566 provides a ligand contact to Mg(2+). A Mg(2+)-binding site is contributed by threonine 568. Residue serine 627 is modified to Phosphoserine. Residues glutamate 765, phenylalanine 813, serine 815, lysine 818, lysine 838, arginine 1034, threonine 1035, threonine 1114, glycine 1115, aspartate 1116, 1167–1174 (VVVIDGAT), arginine 1202, and lysine 1208 each bind ATP. A helical transmembrane segment spans residues 1158–1178 (VDSGNIAHCVVVIDGATMAMF). The Lumenal portion of the chain corresponds to 1179 to 1318 (EGNPTYMSVF…MFSGSSLYEP (140 aa)). Residue aspartate 1229 coordinates Mg(2+). Residues asparagine 1232 and aspartate 1233 each contribute to the ATP site. Residues 1319 to 1339 (WSLSMFNTLFTSLPVLCIGMF) form a helical membrane-spanning segment. The Cytoplasmic portion of the chain corresponds to 1340–1365 (EKDLKPMTLLTVPELYSYGRLSQGFN). Residues 1366–1386 (WLIFMEWVILATTNSLIITFL) traverse the membrane as a helical segment. Residues 1387–1395 (NVVMWGMSS) are Lumenal-facing. A helical membrane pass occupies residues 1396 to 1416 (LSDNTMYPLGLINFTAIVALI). Residues 1417-1432 (NVKSQFVEMHNRNWLA) lie on the Cytoplasmic side of the membrane. A helical transmembrane segment spans residues 1433 to 1453 (FTSVVLSCGGWLVWCCALPIL). Residues 1454–1473 (NNTDQIYDVAYGFYNHFGKD) lie on the Lumenal side of the membrane. The helical transmembrane segment at 1474–1494 (ITFWCTSLVLALLPITLDIVY) threads the bilayer. Residues 1495-1656 (KTFKVMIWPS…IIQARLKDLE (162 aa)) lie on the Cytoplasmic side of the membrane. The segment at 1554 to 1576 (PRTNSRASAKTHNSSIYSMSNGN) is disordered.

Belongs to the cation transport ATPase (P-type) (TC 3.A.3) family. Type IV subfamily. In terms of assembly, component of a flippase complex consisting of DNF3 and YNR048W/CRF1. Interacts with YNR048W/CRF1; the interaction is direct and required for proper expression and endoplasmic reticulum (ER) export of either partner. Requires Mg(2+) as cofactor.

The protein localises to the golgi apparatus. Its subcellular location is the trans-Golgi network membrane. It localises to the endosome membrane. The enzyme catalyses ATP + H2O + phospholipidSide 1 = ADP + phosphate + phospholipidSide 2.. The catalysed reaction is a 1,2-diacyl-sn-glycero-3-phosphocholine(out) + ATP + H2O = a 1,2-diacyl-sn-glycero-3-phosphocholine(in) + ADP + phosphate + H(+). It carries out the reaction a 1,2-diacyl-sn-glycero-3-phosphoethanolamine(out) + ATP + H2O = a 1,2-diacyl-sn-glycero-3-phosphoethanolamine(in) + ADP + phosphate + H(+). Its function is as follows. Catalytic component of a P4-ATPase flippase complex which catalyzes the hydrolysis of ATP coupled to the transport of phosphatidylcholine and small amounts of phosphatidylethanolamine from the lumen to the cytosolic leaflet of the trans-Golgi network and ensures the maintenance of asymmetric distribution of phospholipids. May be involved in transport from early endosomes to the trans-Golgi network (TGN). The chain is Probable phospholipid-transporting ATPase DNF3 (DNF3) from Saccharomyces cerevisiae (strain ATCC 204508 / S288c) (Baker's yeast).